Reading from the N-terminus, the 392-residue chain is GDP-mannose transporter (392 aa).

Positions 1–40 are disordered; the sequence is MANKRNEDIELGPAEGRGSTDKDPFLARRSSSQPNRPQQA. Topologically, residues 1–55 are cytoplasmic; the sequence is MANKRNEDIELGPAEGRGSTDKDPFLARRSSSQPNRPQQAGPFGGYFDKIDHSPG. The span at 29 to 38 shows a compositional bias: polar residues; the sequence is RSSSQPNRPQ. The helical transmembrane segment at 56 to 76 threads the bilayer; it reads ASIIAYCLSSISMTVVNKYVV. Residues 77-80 are Lumenal-facing; it reads SGSE. A helical membrane pass occupies residues 81–101; the sequence is WNLNFFYLAVQSLVCTAAILI. At 102–121 the chain is on the cytoplasmic side; sequence CKQLGMFQNLAAFDSTKAKK. A helical transmembrane segment spans residues 122-144; sequence WFPISLLLVGMIYTSTKALQFLS. At 145–149 the chain is on the lumenal side; the sequence is VPVYT. A helical transmembrane segment spans residues 150 to 168; sequence IFKNLTIIVVAYGEVLWFG. Residues 169–174 lie on the Cytoplasmic side of the membrane; sequence GSVTPM. The helical transmembrane segment at 175-198 threads the bilayer; sequence ALLSFGLMVLSSVIAAWADIQAAV. Topologically, residues 199-213 are lumenal; sequence EGVGHTAEATDAIST. The chain crosses the membrane as a helical span at residues 214–234; sequence LNAGYAWMGMNVFCTAAYLLG. The Cytoplasmic portion of the chain corresponds to 235 to 248; that stretch reads MRKVIKKMNFKDYD. A helical transmembrane segment spans residues 249-269; sequence TMFYNNLLTIPVLIVFSLLFE. The Lumenal portion of the chain corresponds to 270–287; sequence DWSNDNLIKNFPVETRNS. Residues 288–308 traverse the membrane as a helical segment; sequence LFIGMIYSGLAAIFISYCSAW. The Cytoplasmic segment spans residues 309–316; that stretch reads CIRVTSST. A helical membrane pass occupies residues 317 to 337; that stretch reads TYSMVGALNKLPLAISGLIFF. At 338–342 the chain is on the lumenal side; that stretch reads DAPVT. The chain crosses the membrane as a helical span at residues 343–361; it reads FGSVTAIFVGFVSGLVYTW. Residues 362 to 392 are Cytoplasmic-facing; it reads SKTRQKVSQILPTTQPTMSASAASNRDAANA.

Belongs to the TPT transporter family. SLC35D subfamily. Homooligomer.

It is found in the golgi apparatus membrane. Its subcellular location is the cytoplasmic vesicle membrane. The protein localises to the endoplasmic reticulum membrane. Functionally, involved in the import of GDP-mannose from the cytoplasm into the Golgi lumen. In Neurospora crassa (strain ATCC 24698 / 74-OR23-1A / CBS 708.71 / DSM 1257 / FGSC 987), this protein is GDP-mannose transporter (vrg-4).